Consider the following 475-residue polypeptide: Stromelysin-1 (475 aa).

Residues 1 to 17 (MKGLPVLLWLCTAVCSS) form the signal peptide. Positions 18–97 (YPLHGSEEDA…PRCGVPDVGG (80 aa)) are cleaved as a propeptide — activation peptide. The Cysteine switch signature appears at 88–95 (PRCGVPDV). Cysteine 90 serves as a coordination point for Zn(2+). The N-linked (GlcNAc...) asparagine glycan is linked to asparagine 118. Ca(2+)-binding residues include aspartate 122 and aspartate 156. Zn(2+) contacts are provided by histidine 166 and aspartate 168. Ca(2+) is bound by residues aspartate 173, glycine 174, glycine 176, and valine 178. Histidine 181 lines the Zn(2+) pocket. Residues glycine 188, asparagine 190, and aspartate 192 each contribute to the Ca(2+) site. Histidine 194 serves as a coordination point for Zn(2+). The Ca(2+) site is built by aspartate 196, aspartate 197, and glutamate 199. Residue histidine 216 participates in Zn(2+) binding. Glutamate 217 is a catalytic residue. Zn(2+)-binding residues include histidine 220 and histidine 226. 4 Hemopexin repeats span residues 285–334 (LPMC…WPSL), 335–381 (PSNM…GLPE), 383–431 (VQKI…FPGI), and 432–475 (GTKV…WFNC). Cysteine 288 and cysteine 475 are joined by a disulfide. Aspartate 295 provides a ligand contact to Ca(2+). Ca(2+) contacts are provided by aspartate 387 and aspartate 436.

Belongs to the peptidase M10A family. It depends on Ca(2+) as a cofactor. Zn(2+) serves as cofactor.

It localises to the secreted. It is found in the extracellular space. Its subcellular location is the extracellular matrix. It catalyses the reaction Preferential cleavage where P1', P2' and P3' are hydrophobic residues.. With respect to regulation, inhibited by a synthetic peptide corresponding to the inhibitory cysteine switch motif. Inhibited by ethylenediaminetetraacetic acid (EDTA), 1,10-pheanthroline, 2-mecaptoethanol, dithiothreitol and metalloproteinase inhibitor protein TIMP. Can degrade fibronectin, laminin, gelatins of type I, III, IV, and V; collagens III, IV, X, and IX, and cartilage proteoglycans. Activates procollagenase. Functionally, metalloproteinase with a rather broad substrate specificity that can degrade fibronectin, laminin, gelatins of type I, III, IV, and V; collagens III, IV, X, and IX, and cartilage proteoglycans. Activates different molecules including growth factors, plasminogen or other matrix metalloproteinases such as MMP9. Once released into the extracellular matrix (ECM), the inactive pro-enzyme is activated by the plasmin cascade signaling pathway. Also acts intracellularly. For example, in dopaminergic neurons, gets activated by the serine protease HTRA2 upon stress and plays a pivotal role in DA neuronal degeneration by mediating microglial activation and alpha-synuclein/SNCA cleavage. In addition, plays a role in immune response and possesses antiviral activity against various viruses. Mechanistically, translocates from the cytoplasm into the cell nucleus upon virus infection to influence NF-kappa-B activities. This chain is Stromelysin-1 (Mmp3), found in Rattus norvegicus (Rat).